A 420-amino-acid polypeptide reads, in one-letter code: MSNNNNNNNNNNDEENSKLDIVKKQFQEKEKQRLQSKLEKREISNKEQIDQSSSNIASETLLLINNLSDDIENRLNEISNNTNENKAEDLKESYNQMEESLSEINSITTMSSHILTSYDVKSILENIDNLRKQIDKSKEKYMPKQKLSLTRKKTKTTTVSTKTTSSKEDTNETFNNNNNNNNDNDNTDNNNNKISTEPIFNLINIKGFKNKELFYPPKKEEEIGNQDINNNNNNNNNNNNNNNNNNNNNNNNNNNNNNSNSINDLFISDLTDCTVILDMKVLTALKINNLVNCKIRANSPIDGSIFIDNCINSIFSLVSRQIRIHYCTDCQFNIFVKSNPIIEGSKQIKFSSYLQNLKQQQQQQQQQEQEKVLSSFDNKRFKEYSFDLESNNIDSDKWKLVNDFDWIQQKQSPNWSLVEY.

Positions 9–142 (NNNNDEENSK…QIDKSKEKYM (134 aa)) form a coiled coil. Basic and acidic residues predominate over residues 31–49 (KQRLQSKLEKREISNKEQI). Disordered regions lie at residues 31 to 52 (KQRL…IDQS), 138 to 193 (KEKY…NNNK), and 222 to 257 (EIGN…NNNN). Composition is skewed to low complexity over residues 172-192 (ETFN…NNNN) and 228-257 (INNN…NNNN). The C-CAP/cofactor C-like domain occupies 216 to 366 (PPKKEEEIGN…LKQQQQQQQQ (151 aa)).

The protein belongs to the TBCC family. In terms of assembly, supercomplex made of cofactors A to E. Cofactors A and D function by capturing and stabilizing tubulin in a quasi-native conformation. Cofactor E binds to the cofactor D-tubulin complex; interaction with cofactor C then causes the release of tubulin polypeptides that are committed to the native state.

Tubulin-folding protein; involved in the final step of the tubulin folding pathway. This chain is Tubulin-specific chaperone C (tbcc), found in Dictyostelium discoideum (Social amoeba).